The sequence spans 307 residues: Protein Y (307 aa).

It belongs to the ATP-dependent AMP-binding enzyme family.

The protein operates within antibiotic biosynthesis; candicidin biosynthesis. Functionally, may be a p-aminobenzoic acid-CoA ligase that activates PabA to start the biosynthesis of candicidin. This chain is Protein Y, found in Streptomyces griseus.